The following is a 542-amino-acid chain: Protein MGF 505-11L (542 aa).

The protein belongs to the asfivirus MGF 505 family.

Functionally, plays a role in virus cell tropism, and may be required for efficient virus replication in macrophages. This is Protein MGF 505-11L from African swine fever virus (isolate Tick/Malawi/Lil 20-1/1983) (ASFV).